A 224-amino-acid polypeptide reads, in one-letter code: Lipoprotein-releasing system ATP-binding protein LolD (224 aa).

The ABC transporter domain occupies 4-224 (LSIRNVFKSY…RLAGGEVSEA (221 aa)). 40–47 (GASGAGKS) lines the ATP pocket.

This sequence belongs to the ABC transporter superfamily. Lipoprotein translocase (TC 3.A.1.125) family. The complex is composed of two ATP-binding proteins (LolD) and two transmembrane proteins (LolC and LolE).

It is found in the cell inner membrane. Its function is as follows. Part of the ABC transporter complex LolCDE involved in the translocation of mature outer membrane-directed lipoproteins, from the inner membrane to the periplasmic chaperone, LolA. Responsible for the formation of the LolA-lipoprotein complex in an ATP-dependent manner. The sequence is that of Lipoprotein-releasing system ATP-binding protein LolD from Myxococcus xanthus (strain DK1622).